Reading from the N-terminus, the 32-residue chain is Unknown protein from spot 206 of 2D-PAGE of etiolated coleoptile (32 aa).

The protein is Unknown protein from spot 206 of 2D-PAGE of etiolated coleoptile of Zea mays (Maize).